Here is a 378-residue protein sequence, read N- to C-terminus: Zinc transporter 7 (378 aa).

The Cytoplasmic segment spans residues 1–37; it reads MLPLSIKDDEYKPPKFNLFGKISGWFRSILSDKTSRN. Residues 38 to 58 form a helical membrane-spanning segment; it reads LFFFLCLNLSFAFVELLYGIW. Residues 59-67 are Lumenal-facing; sequence SNCLGLISD. The chain crosses the membrane as a helical span at residues 68-88; sequence SFHMFFDSTAILAGLAASVIS. Over 89–102 the chain is Cytoplasmic; it reads KWRDNDAFSYGYVR. A helical transmembrane segment spans residues 103–123; it reads AEVLAGFVNGLFLIFTAFFIF. The Lumenal segment spans residues 124–140; sequence SEGVERALAPPDVHHER. A helical membrane pass occupies residues 141 to 161; sequence LLLVSILGFVVNLVGIFVFNH. The his-rich loop stretch occupies residues 161–220; the sequence is HGGHGHSHGSGHGHSHSLFNGALDHSHGHEDHCHSHEAKHGAAHSHDHDHAHGHGHLHSH. The Cytoplasmic portion of the chain corresponds to 162-238; sequence GGHGHSHGSG…AGPSRQILQG (77 aa). Over residues 186-223 the composition is skewed to basic and acidic residues; that stretch reads SHGHEDHCHSHEAKHGAAHSHDHDHAHGHGHLHSHDGP. A disordered region spans residues 186–224; sequence SHGHEDHCHSHEAKHGAAHSHDHDHAHGHGHLHSHDGPS. Residues 239 to 259 traverse the membrane as a helical segment; it reads VFLHILADTLGSIGVIASAIM. The Lumenal portion of the chain corresponds to 260 to 264; it reads MQNFG. Residues 265–285 form a helical membrane-spanning segment; sequence LMIADPICSILIAILIVVSVI. At 286-378 the chain is on the cytoplasmic side; sequence PLLRESVGIL…LYVQIDFAAM (93 aa).

It belongs to the cation diffusion facilitator (CDF) transporter (TC 2.A.4) family. SLC30A subfamily. In terms of assembly, homooligomer. Highly expressed in liver, spleen, duodenum and part of the jejunum of small intestine (at protein level). Moderately expressed in kidney, lung, and brain. Barely detectable in heart. In brain, expressed in cerebellum, cerebral cortex and hippocampus (at protein level).

It is found in the golgi apparatus membrane. The protein resides in the cytoplasmic vesicle. It localises to the golgi apparatus. Its subcellular location is the trans-Golgi network. The protein localises to the sarcoplasmic reticulum. It is found in the mitochondrion. The catalysed reaction is Zn(2+)(in) = Zn(2+)(out). Its function is as follows. Zinc ion transporter mediating zinc entry from the cytosol into the lumen of organelles along the secretory pathway. By contributing to zinc ion homeostasis within the early secretory pathway, regulates the activation and folding of enzymes like alkaline phosphatases. This Mus musculus (Mouse) protein is Zinc transporter 7.